Here is a 179-residue protein sequence, read N- to C-terminus: Riboflavin kinase (179 aa).

Residue 61–66 (GDGEGR) participates in CDP binding. Residues threonine 90 and asparagine 92 each coordinate Mg(2+). Residues threonine 147 and glutamate 155 each contribute to the FMN site. 160–163 (VELR) is a binding site for CDP.

Belongs to the archaeal riboflavin kinase family. Requires Mg(2+) as cofactor.

It catalyses the reaction riboflavin + CTP = CDP + FMN + H(+). Its pathway is cofactor biosynthesis; FMN biosynthesis; FMN from riboflavin (CTP route): step 1/1. Its function is as follows. Catalyzes the CTP-dependent phosphorylation of riboflavin (vitamin B2) to form flavin mononucleotide (FMN). This is Riboflavin kinase from Ignicoccus hospitalis (strain KIN4/I / DSM 18386 / JCM 14125).